Consider the following 1120-residue polypeptide: MVLNSLDKMIQLQKNTANIRNICVLAHVDHGKTTLADCLISSNGIISSRLAGKLRYMDSREDEQIRGITMKSSAISLHYATGNEEYLINLIDSPGHVDFSSEVSTAVRICDGCIIVVDAVEGVCPQTQAVLRQAWLENIRPVLVINKIDRLIVELKFTPQEAYSHLKNILEQINALTGTLFTSKVLEERAERETESQVNPNSEQGEQVYDWSTGLEDTDDSHLYFSPEQGNVVFTSAIDGWGFGIEHFARIYSQKIGIKKEVLMKTLWGDYYINMKAKKIMKGDQAKGKKPLFVQLILENIWSLYDAVLKKDKDKIDKIVTSLGLKIGAREARHSDPKVQINAICSQWLPISHAVLAMVCQKLPSPLDITAERVERLMCTGSQTFDSFPPETQALKAAFMKCGSEDTAPVIIFVSKMFAVDAKALPQNKPRPLTQEEIAQRRERARQRHAEKLAAAQGQAPLEPTQDGSAIETCPKGEEPRGDEQQVESMTPKPVLQEENNQESFIAFARVFSGVARRGKKIFVLGPKYSPLEFLRRVPLGFSAPPDGLPQVPHMAYCALENLYLLMGRELEYLEEVPPGNVLGIGGLQDFVLKSATLCSLPSCPPFIPLNFEATPIVRVAVEPKHPSEMPQLVKGMKLLNQADPCVQILIQETGEHVLVTAGEVHLQRCLDDLKERFAKIHISVSEPIIPFRETITKPPKVDMVNEEIGKQQKVAVIHQMKEDQSKIPEGIQVDSDGLITITTPNKLATLSVRAMPLPEEVTQILEENSDLIRSMEQLTSSLNEGENTHMIHQKTQEKIWEFKGKLEQHLTGRRWRNIVDQIWSFGPRKCGPNILVNKSEDFQNSVWTGPADKASKEASRYRDLGNSIVSGFQLATLSGPMCEEPLMGVCFVLEKWDLSKFEEQGASDLAKEGQEENETCSGGNENQELQDGCSEAFEKRTSQKGESPLTDCYGPFSGQLIATMKEACRYALQVKPQRLMAAMYTCDIMATGDVLGRVYAVLSKREGRVLQEEMKEGTDMFIIKAVLPVAESFGFADEIRKRTSGLASPQLVFSHWEIIPSDPFWVPTTEEEYLHFGEKADSENQARKYMNAVRKRKGLYVEEKIVEHAEKQRTLSKNK.

Positions 17–272 (ANIRNICVLA…LMKTLWGDYY (256 aa)) constitute a tr-type G domain. GTP-binding positions include 26–33 (AHVDHGKT), 92–96 (DSPGH), and 146–149 (NKID). The segment at 430–496 (PRPLTQEEIA…VESMTPKPVL (67 aa)) is disordered. 2 stretches are compositionally biased toward basic and acidic residues: residues 438–452 (IAQR…HAEK) and 475–484 (PKGEEPRGDE). Lysine 528 bears the N6-acetyllysine mark. Positions 907 to 930 (ASDLAKEGQEENETCSGGNENQEL) are disordered. Residues 920–930 (TCSGGNENQEL) show a composition bias toward polar residues.

It belongs to the TRAFAC class translation factor GTPase superfamily. Classic translation factor GTPase family. In terms of assembly, associates with the 60S ribosomal subunit. Found in a complex consisting of the 60S ribosomal subunit, SBDS and EFL1. Interacts with SBDS and binds to GTP and GDP; the interaction with SBDS decreases EFL1 affinity for GDP and facilitates GDP release. As to expression, expressed at low levels in brain. Expression is highly increased in glioma tissues.

The catalysed reaction is GTP + H2O = GDP + phosphate + H(+). GTPase activity is stimulated in the presence of 60S ribosome subunits. Its function is as follows. GTPase involved in the biogenesis of the 60S ribosomal subunit and translational activation of ribosomes. Together with SBDS, triggers the GTP-dependent release of EIF6 from 60S pre-ribosomes in the cytoplasm, thereby activating ribosomes for translation competence by allowing 80S ribosome assembly and facilitating EIF6 recycling to the nucleus, where it is required for 60S rRNA processing and nuclear export. This Homo sapiens (Human) protein is Elongation factor-like GTPase 1.